A 467-amino-acid chain; its full sequence is ATP synthase subunit beta (467 aa).

Residue 150–157 (GGAGVGKT) participates in ATP binding.

Belongs to the ATPase alpha/beta chains family. F-type ATPases have 2 components, CF(1) - the catalytic core - and CF(0) - the membrane proton channel. CF(1) has five subunits: alpha(3), beta(3), gamma(1), delta(1), epsilon(1). CF(0) has three main subunits: a(1), b(2) and c(9-12). The alpha and beta chains form an alternating ring which encloses part of the gamma chain. CF(1) is attached to CF(0) by a central stalk formed by the gamma and epsilon chains, while a peripheral stalk is formed by the delta and b chains.

It localises to the cell inner membrane. The enzyme catalyses ATP + H2O + 4 H(+)(in) = ADP + phosphate + 5 H(+)(out). Functionally, produces ATP from ADP in the presence of a proton gradient across the membrane. The catalytic sites are hosted primarily by the beta subunits. This chain is ATP synthase subunit beta, found in Aliivibrio fischeri (strain MJ11) (Vibrio fischeri).